Consider the following 101-residue polypeptide: Small ribosomal subunit protein uS10 (101 aa).

Belongs to the universal ribosomal protein uS10 family. In terms of assembly, part of the 30S ribosomal subunit.

Involved in the binding of tRNA to the ribosomes. The protein is Small ribosomal subunit protein uS10 of Corynebacterium jeikeium (strain K411).